The chain runs to 249 residues: Proteasome activator complex subunit 1 (249 aa).

Residues 59 to 102 (APLDIPVPDPVKEKEKEERKKQQEKEEKEEKKKGDEDDKGPPCG) form a disordered region. Over residues 68–98 (PVKEKEKEERKKQQEKEEKEEKKKGDEDDKG) the composition is skewed to basic and acidic residues.

Belongs to the PA28 family. As to quaternary structure, heterodimer of PSME1 and PSME2, which forms a hexameric ring. PSME1 can form homoheptamers.

Its function is as follows. Implicated in immunoproteasome assembly and required for efficient antigen processing. The PA28 activator complex enhances the generation of class I binding peptides by altering the cleavage pattern of the proteasome. The chain is Proteasome activator complex subunit 1 (Psme1) from Mus musculus (Mouse).